Here is an 86-residue protein sequence, read N- to C-terminus: Co-chaperonin GroES (86 aa).

It belongs to the GroES chaperonin family. In terms of assembly, heptamer of 7 subunits arranged in a ring. Interacts with the chaperonin GroEL.

It is found in the cytoplasm. Together with the chaperonin GroEL, plays an essential role in assisting protein folding. The GroEL-GroES system forms a nano-cage that allows encapsulation of the non-native substrate proteins and provides a physical environment optimized to promote and accelerate protein folding. GroES binds to the apical surface of the GroEL ring, thereby capping the opening of the GroEL channel. The sequence is that of Co-chaperonin GroES from Campylobacter curvus (strain 525.92).